An 890-amino-acid polypeptide reads, in one-letter code: Wolframin (890 aa).

Met1 bears the N-acetylmethionine mark. The span at 1–20 (MNSGTPPPSPSGPPPPPAPQ) shows a compositional bias: pro residues. The interval 1 to 83 (MNSGTPPPSP…ETDRAGPMKA (83 aa)) is disordered. Positions 1–323 (MNSGTPPPSP…MHWLSTIVPT (323 aa)) are interaction with ATP6V1A. The residue at position 30 (Thr30) is a Phosphothreonine. Ser32 bears the Phosphoserine mark. Positions 50–67 (PSAGRSAGEAAAPEPRAP) are enriched in low complexity. A compositionally biased stretch (basic and acidic residues) spans 71–83 (SREETDRAGPMKA). Ser158 carries the phosphoserine modification. The segment at 208-227 (VNEQDGGAQPGPVPKSLQKQ) is disordered. 10 consecutive transmembrane segments (helical) span residues 314-334 (MHWL…FFFI), 340-360 (IDFF…VSMV), 402-422 (NHLE…FSFP), 427-447 (DCIP…TSYM), 465-485 (VAAG…FLKV), 496-516 (GHFI…LFYL), 529-549 (TYCY…SVVI), 563-583 (IGYF…ALMG), 589-609 (RWFL…CGVP), and 632-652 (SSMV…CWFY). The Lumenal portion of the chain corresponds to 653–869 (VYRSEGMKVY…HVKIEQDWRS (217 aa)). Asn663 and Asn748 each carry an N-linked (GlcNAc...) asparagine glycan. The chain crosses the membrane as a helical span at residues 870 to 890 (TVHGALKFAFDFFFFPFLSAA).

In terms of assembly, interacts with ATP6V1A. As to expression, highly expressed in the developing lens.

It localises to the endoplasmic reticulum membrane. Its subcellular location is the cytoplasmic vesicle. The protein resides in the secretory vesicle. Its function is as follows. Participates in the regulation of cellular Ca(2+) homeostasis, at least partly, by modulating the filling state of the endoplasmic reticulum Ca(2+) store. Negatively regulates the ER stress response and positively regulates the stability of V-ATPase subunits ATP6V1A and ATP1B1 by preventing their degradation through an unknown proteasome-independent mechanism. The sequence is that of Wolframin (Wfs1) from Mus musculus (Mouse).